The primary structure comprises 111 residues: Cell cycle protein GpsB (111 aa).

Residues Ile-38–Val-72 are a coiled coil.

This sequence belongs to the GpsB family. Forms polymers through the coiled coil domains. Interacts with PBP1, MreC and EzrA.

It is found in the cytoplasm. Functionally, divisome component that associates with the complex late in its assembly, after the Z-ring is formed, and is dependent on DivIC and PBP2B for its recruitment to the divisome. Together with EzrA, is a key component of the system that regulates PBP1 localization during cell cycle progression. Its main role could be the removal of PBP1 from the cell pole after pole maturation is completed. Also contributes to the recruitment of PBP1 to the division complex. Not essential for septum formation. The chain is Cell cycle protein GpsB from Bacillus cereus (strain ATCC 10987 / NRS 248).